We begin with the raw amino-acid sequence, 423 residues long: Glutaminase (423 aa).

A glutaminase region spans residues glycine 27–methionine 312. Residues serine 69, asparagine 119, glutamate 165, asparagine 172, tyrosine 196, tyrosine 248, and valine 266 each contribute to the substrate site. The STAS domain occupies alanine 321 to leucine 423.

Belongs to the glutaminase family. Homotetramer.

The catalysed reaction is L-glutamine + H2O = L-glutamate + NH4(+). In Corynebacterium efficiens (strain DSM 44549 / YS-314 / AJ 12310 / JCM 11189 / NBRC 100395), this protein is Glutaminase (glsA).